The chain runs to 301 residues: Nitric oxide synthase-interacting protein (301 aa).

Ser-36 carries the post-translational modification Phosphoserine. Residues 55–75 (DPVVTPDGYLYEREAILEYIL) form a U-box-like region. Positions 78-101 (KREIARQVKAYEKQRGARREEQKE) match the Nuclear localization signal motif. A disordered region spans residues 131–154 (PKAATLPNTEGEQPGPSVGPVGKD).

This sequence belongs to the NOSIP family. Interacts with NOS1 and NOS3. Interacts with PP2A holoenzyme, containing PPP2CA, PPP2CB, PPP2R1A and PPP2R2A subunits.

It is found in the cytoplasm. The protein resides in the nucleus. It carries out the reaction S-ubiquitinyl-[E2 ubiquitin-conjugating enzyme]-L-cysteine + [acceptor protein]-L-lysine = [E2 ubiquitin-conjugating enzyme]-L-cysteine + N(6)-ubiquitinyl-[acceptor protein]-L-lysine.. The protein operates within protein modification; protein ubiquitination. In terms of biological role, E3 ubiquitin-protein ligase that is essential for proper development of the forebrain, the eye and the face. Catalyzes monoubiquitination of serine/threonine-protein phosphatase 2A (PP2A) catalytic subunit PPP2CA/PPP2CB. Negatively regulates nitric oxide production by inducing NOS1 and NOS3 translocation to actin cytoskeleton and inhibiting their enzymatic activity. This Mus musculus (Mouse) protein is Nitric oxide synthase-interacting protein (Nosip).